A 327-amino-acid chain; its full sequence is Ubiquinone biosynthesis protein COQ4, mitochondrial (327 aa).

Zn(2+) is bound by residues His208, Asp209, His212, and Glu224.

This sequence belongs to the COQ4 family. Component of a multi-subunit COQ enzyme complex, composed of at least COQ3, COQ4, COQ5, COQ6, COQ7 and COQ9. Zn(2+) is required as a cofactor.

Its subcellular location is the mitochondrion inner membrane. The catalysed reaction is a 4-hydroxy-3-methoxy-5-(all-trans-polyprenyl)benzoate + H(+) = a 2-methoxy-6-(all-trans-polyprenyl)phenol + CO2. It functions in the pathway cofactor biosynthesis; ubiquinone biosynthesis. In terms of biological role, lyase that catalyzes the C1-decarboxylation of 4-hydroxy-3-methoxy-5-(all-trans-polyprenyl)benzoic acid into 2-methoxy-6-(all-trans-polyprenyl)phenol during ubiquinone biosynthesis. This chain is Ubiquinone biosynthesis protein COQ4, mitochondrial, found in Lachancea thermotolerans (strain ATCC 56472 / CBS 6340 / NRRL Y-8284) (Yeast).